The following is a 75-amino-acid chain: Metallothionein-like protein 1 (75 aa).

This sequence belongs to the metallothionein superfamily. Type 15 family.

In terms of biological role, metallothioneins have a high content of cysteine residues that bind various heavy metals. This Pisum sativum (Garden pea) protein is Metallothionein-like protein 1 (MTA).